Consider the following 234-residue polypeptide: Endonuclease NucS (234 aa).

Belongs to the NucS endonuclease family.

Its subcellular location is the cytoplasm. Cleaves both 3' and 5' ssDNA extremities of branched DNA structures. The polypeptide is Endonuclease NucS (Bifidobacterium animalis subsp. lactis (strain AD011)).